A 154-amino-acid chain; its full sequence is uncharacterized protein (154 aa).

A mitochondrion-targeting transit peptide spans 1-42 (MLRVIWKHSSRVTRSIELSNISTTNHTRSLRRLSWISPRRFY).

Its subcellular location is the mitochondrion. This is an uncharacterized protein from Saccharomyces cerevisiae (strain ATCC 204508 / S288c) (Baker's yeast).